Reading from the N-terminus, the 160-residue chain is Calcium and integrin-binding family member 3 (160 aa).

EF-hand domains lie at 39-74, 76-111, and 117-152; these read KDNP…MSEM, PRDL…LTRG, and EVTL…APDF. Ca(2+) is bound by residues D89, N91, D93, Y95, D100, D130, D132, D134, R136, and D141.

In terms of assembly, monomer and homodimer. Interacts with ITGA2B (via C-terminus cytoplasmic tail region); the interaction is stabilized/increased in a calcium and magnesium-dependent manner. Interacts with TMC1. As to expression, expressed in heart, liver and inner ear. In the inner ear, expressed in vestibule and basilar membrane cells. Expressed in megakaryocytes and endothelial cells.

Its function is as follows. Acts as an auxiliary subunit of the sensory mechanoelectrical transduction (MET) channel in hair cells. Plays a role in regulating hair cell MET channel localization and function. This Mus musculus (Mouse) protein is Calcium and integrin-binding family member 3 (Cib3).